We begin with the raw amino-acid sequence, 130 residues long: Small ribosomal subunit protein uS8 (130 aa).

The protein belongs to the universal ribosomal protein uS8 family. In terms of assembly, part of the 30S ribosomal subunit.

One of the primary rRNA binding proteins, it binds directly to 16S rRNA central domain where it helps coordinate assembly of the platform of the 30S subunit. The chain is Small ribosomal subunit protein uS8 from Methanoculleus marisnigri (strain ATCC 35101 / DSM 1498 / JR1).